A 108-amino-acid chain; its full sequence is Urease subunit beta (108 aa).

The protein belongs to the urease beta subunit family. Heterotrimer of UreA (gamma), UreB (beta) and UreC (alpha) subunits. Three heterotrimers associate to form the active enzyme.

The protein resides in the cytoplasm. The catalysed reaction is urea + 2 H2O + H(+) = hydrogencarbonate + 2 NH4(+). Its pathway is nitrogen metabolism; urea degradation; CO(2) and NH(3) from urea (urease route): step 1/1. This is Urease subunit beta from Chromohalobacter salexigens (strain ATCC BAA-138 / DSM 3043 / CIP 106854 / NCIMB 13768 / 1H11).